The following is a 1188-amino-acid chain: DNA-directed RNA polymerase subunit beta (1188 aa).

It belongs to the RNA polymerase beta chain family. In terms of assembly, the RNAP catalytic core consists of 2 alpha, 1 beta, 1 beta' and 1 omega subunit. When a sigma factor is associated with the core the holoenzyme is formed, which can initiate transcription.

The catalysed reaction is RNA(n) + a ribonucleoside 5'-triphosphate = RNA(n+1) + diphosphate. Functionally, DNA-dependent RNA polymerase catalyzes the transcription of DNA into RNA using the four ribonucleoside triphosphates as substrates. In Streptococcus equi subsp. equi (strain 4047), this protein is DNA-directed RNA polymerase subunit beta.